Here is a 794-residue protein sequence, read N- to C-terminus: Kinesin-like protein KIN-13A (794 aa).

The Kinesin motor domain occupies K193 to L526. G282–T289 is an ATP binding site. Positions S525 to T699 are disordered. Over residues E569–S579 the composition is skewed to basic and acidic residues. 2 stretches are compositionally biased toward polar residues: residues N580 to N593 and E611 to E632. Basic and acidic residues predominate over residues G650 to S668. Positions S669–Q696 are enriched in polar residues. Positions E705–V742 form a coiled coil.

It belongs to the TRAFAC class myosin-kinesin ATPase superfamily. Kinesin family. KIN-13 subfamily. As to quaternary structure, component of the active ARAC10-IRC5-KIN13A complex. Interacts (via-C-terminus) with ICR2 and ICR5 (via N-terminus). No interactions with ICR1. Expressed in leaves, roots, young and mature seedlings. Preferentially expressed in the secondary cell wall pits of differentiating metaxylem vessel cells (at the protein level).

The protein localises to the golgi apparatus. It localises to the golgi stack. Its subcellular location is the cytoplasm. The protein resides in the cytoskeleton. Internal motor kinesin involved in trichome morphogenesis. Participates in regulating the formation of Golgi-associated vesicles. Plays a central role in microtubule disassembly via the active ARAC10-ICR5 cascade, which establishes the secondary cell wall pattern in metaxylem vessel cells. Acts redundantly with KIN13B to modulate cell wall synthesis and cell expansion via the THE1 pathway. This Arabidopsis thaliana (Mouse-ear cress) protein is Kinesin-like protein KIN-13A.